A 408-amino-acid polypeptide reads, in one-letter code: Repulsive guidance molecule B homolog drag-1 (408 aa).

The signal sequence occupies residues 1–22; it reads MSIVYLVSITFIFSVFKPITSC. Residues 23 to 387 are Extracellular-facing; sequence RVEECAAWFQ…SEIFKKCIPS (365 aa). Residues Asn-60, Asn-134, Asn-183, and Asn-376 are each glycosylated (N-linked (GlcNAc...) asparagine). Residues 388–408 form a helical membrane-spanning segment; the sequence is KSIRFYPFLAIFFFALLSLLC.

Belongs to the repulsive guidance molecule (RGM) family. In terms of assembly, interacts with unc-40 (via FN6 domain), dbl-1 and sma-6. In terms of tissue distribution, expressed in pharyngeal, hypodermal and intestinal cells.

The protein localises to the cell membrane. Probably in association with the cell surface receptor unc-40, positively modulates the BMP-like Sma/Mab signaling pathway through interaction with both the ligand dbl-1 and its type I receptor sma-6. Regulates body size and this may be through modulation of the Sma/Mab signaling pathway. The sequence is that of Repulsive guidance molecule B homolog drag-1 from Caenorhabditis elegans.